Consider the following 92-residue polypeptide: MSGITRDSRPALRAGVRLQQDRARDQWVLLAPERVVELDDIALVVAQRYDGTRSLAQIAQELAAEFDADAAQIEADVIELTDTLHQKRLLRL.

The protein belongs to the PqqD family. As to quaternary structure, monomer. Interacts with PqqE.

It participates in cofactor biosynthesis; pyrroloquinoline quinone biosynthesis. In terms of biological role, functions as a PqqA binding protein and presents PqqA to PqqE, in the pyrroloquinoline quinone (PQQ) biosynthetic pathway. This is PqqA binding protein from Xanthomonas axonopodis pv. citri (strain 306).